A 192-amino-acid chain; its full sequence is Protein FAM210B, mitochondrial (192 aa).

The transit peptide at 1–58 (MAGLLALLGPAGRVGARVRPRATWLLGATAPCAPPPLALALLPPRLDARLLRTARGDC) directs the protein to the mitochondrion. A disordered region spans residues 57–80 (DCRGHQDPSQATGTTGSSVSCTEE). Positions 63 to 77 (DPSQATGTTGSSVSC) are enriched in polar residues. A DUF1279 domain is found at 80-191 (EKKQSKSQQL…VGFFKPPAAK (112 aa)). 2 helical membrane passes run 99–119 (VGVS…YMVV) and 150–170 (FVVA…ITLV).

Belongs to the FAM210 family. In terms of tissue distribution, expressed in late erythroblast differentiation stages. Underexpressed in ovarian cancer epithelia cells compared with normal human ovarian surface epithelia.

The protein localises to the mitochondrion. It is found in the mitochondrion outer membrane. Plays a role in erythroid differentiation. Involved in cell proliferation and tumor cell growth suppression. Involved in the metabolic reprogramming of cancer cells in a PDK4-dependent manner. This Homo sapiens (Human) protein is Protein FAM210B, mitochondrial.